A 78-amino-acid polypeptide reads, in one-letter code: Short neurotoxin SNTX26 (78 aa).

The N-terminal stretch at 1 to 21 (MKTLLLTFLVVTIVCLDLGYT) is a signal peptide. 4 cysteine pairs are disulfide-bonded: Cys-24-Cys-40, Cys-33-Cys-58, Cys-62-Cys-70, and Cys-71-Cys-76.

The protein belongs to the three-finger toxin family. Short-chain subfamily. Expressed by the venom gland.

The protein resides in the secreted. Its function is as follows. This three-finger toxin binds and inhibits the nicotinic acetylcholine receptor (nAChR). The polypeptide is Short neurotoxin SNTX26 (Ophiophagus hannah (King cobra)).